The chain runs to 688 residues: Homoaconitase, mitochondrial (688 aa).

A mitochondrion-targeting transit peptide spans 1–19; that stretch reads MALLYLSTRSSLKKTGARC. C346, C406, and C409 together coordinate [4Fe-4S] cluster.

This sequence belongs to the aconitase/IPM isomerase family. Requires [4Fe-4S] cluster as cofactor.

Its subcellular location is the mitochondrion. It catalyses the reaction (2R,3S)-homoisocitrate = cis-homoaconitate + H2O. It functions in the pathway amino-acid biosynthesis; L-lysine biosynthesis via AAA pathway; L-alpha-aminoadipate from 2-oxoglutarate: step 3/5. Catalyzes the reversible hydration of cis-homoaconitate to (2R,3S)-homoisocitrate, a step in the alpha-aminoadipate pathway for lysine biosynthesis. This Debaryomyces hansenii (strain ATCC 36239 / CBS 767 / BCRC 21394 / JCM 1990 / NBRC 0083 / IGC 2968) (Yeast) protein is Homoaconitase, mitochondrial (LYS4).